Consider the following 115-residue polypeptide: Large ribosomal subunit protein bL20 (115 aa).

It belongs to the bacterial ribosomal protein bL20 family.

Functionally, binds directly to 23S ribosomal RNA and is necessary for the in vitro assembly process of the 50S ribosomal subunit. It is not involved in the protein synthesizing functions of that subunit. The chain is Large ribosomal subunit protein bL20 from Prochlorococcus marinus (strain MIT 9312).